The chain runs to 169 residues: Cuticle protein 21 (169 aa).

A run of 6 repeats spans residues 21–24, 27–30, 33–36, 39–42, 47–50, and 53–56. The Chitin-binding type R&amp;R domain maps to 65 to 135; the sequence is NPQYSYAYNV…KEAGAHPAPV (71 aa). Repeat copies occupy residues 140–143, 146–149, and 160–163.

Functionally, component of the cuticle of migratory locust which contains more than 100 different structural proteins. The chain is Cuticle protein 21 (ACP21) from Locusta migratoria (Migratory locust).